A 1347-amino-acid chain; its full sequence is Spermatogenesis-associated protein 31A5 (1347 aa).

The helical transmembrane segment at 23–43 threads the bilayer; that stretch reads PWVLDIFLTLVFALGFFFLLL. Disordered regions lie at residues 55–87, 106–233, 373–397, 628–657, 900–955, 1084–1161, and 1313–1335; these read PSPS…GREC, GPHL…RDST, EQDT…GPQK, DESP…KEAQ, RGIP…REAV, VHEE…PSVS, and KAVS…SHHH. Basic residues predominate over residues 60–82; that stretch reads GKRKCPVGRRRRPRGRMKNHSLR. A compositionally biased stretch (polar residues) spans 165–178; the sequence is LASTPSPGPMTTSV. A compositionally biased stretch (pro residues) spans 198 to 211; that stretch reads PEPPALFPHPPHTP. 2 stretches are compositionally biased toward polar residues: residues 631 to 651 and 927 to 948; these read PGTS…STGE and LTYS…SSKA. 2 stretches are compositionally biased toward basic and acidic residues: residues 1108–1127 and 1137–1146; these read HKSE…RLEG and RKTEDTHQDE.

It belongs to the SPATA31 family.

The protein resides in the membrane. In terms of biological role, may play a role in spermatogenesis. The polypeptide is Spermatogenesis-associated protein 31A5 (SPATA31A5) (Homo sapiens (Human)).